A 218-amino-acid chain; its full sequence is Histidine biosynthesis bifunctional protein HisIE (218 aa).

A phosphoribosyl-AMP cyclohydrolase region spans residues 1–131 (MAPHQFKSKG…GDYDLPPADT (131 aa)). The phosphoribosyl-ATP pyrophosphohydrolase stretch occupies residues 132–218 (LSQVFRVVEE…VYRALQQRRR (87 aa)).

The protein in the N-terminal section; belongs to the PRA-CH family. This sequence in the C-terminal section; belongs to the PRA-PH family.

It is found in the cytoplasm. It carries out the reaction 1-(5-phospho-beta-D-ribosyl)-ATP + H2O = 1-(5-phospho-beta-D-ribosyl)-5'-AMP + diphosphate + H(+). The catalysed reaction is 1-(5-phospho-beta-D-ribosyl)-5'-AMP + H2O = 1-(5-phospho-beta-D-ribosyl)-5-[(5-phospho-beta-D-ribosylamino)methylideneamino]imidazole-4-carboxamide. The protein operates within amino-acid biosynthesis; L-histidine biosynthesis; L-histidine from 5-phospho-alpha-D-ribose 1-diphosphate: step 2/9. It functions in the pathway amino-acid biosynthesis; L-histidine biosynthesis; L-histidine from 5-phospho-alpha-D-ribose 1-diphosphate: step 3/9. This is Histidine biosynthesis bifunctional protein HisIE from Gloeobacter violaceus (strain ATCC 29082 / PCC 7421).